The primary structure comprises 1403 residues: DNA-directed RNA polymerase subunit beta' (1403 aa).

Positions 70, 72, 85, and 88 each coordinate Zn(2+). Positions 461, 463, and 465 each coordinate Mg(2+). A disordered region spans residues 687–708; it reads QQISQEETTGDRDGKRETRKQP. Basic and acidic residues predominate over residues 695-706; the sequence is TGDRDGKRETRK. 4 residues coordinate Zn(2+): cysteine 805, cysteine 879, cysteine 886, and cysteine 889. Positions 1381 to 1403 are disordered; it reads THGDTGPLGEPSRPVGTQTTGAA.

It belongs to the RNA polymerase beta' chain family. In terms of assembly, the RNAP catalytic core consists of 2 alpha, 1 beta, 1 beta' and 1 omega subunit. When a sigma factor is associated with the core the holoenzyme is formed, which can initiate transcription. Mg(2+) serves as cofactor. It depends on Zn(2+) as a cofactor.

It carries out the reaction RNA(n) + a ribonucleoside 5'-triphosphate = RNA(n+1) + diphosphate. Its function is as follows. DNA-dependent RNA polymerase catalyzes the transcription of DNA into RNA using the four ribonucleoside triphosphates as substrates. The protein is DNA-directed RNA polymerase subunit beta' of Myxococcus xanthus (strain DK1622).